The chain runs to 88 residues: Small ribosomal subunit protein eS21 (88 aa).

Belongs to the eukaryotic ribosomal protein eS21 family. Component of the 40S small ribosomal subunit.

It is found in the cytoplasm. The protein resides in the cytosol. It localises to the rough endoplasmic reticulum. The polypeptide is Small ribosomal subunit protein eS21 (rps-21) (Caenorhabditis elegans).